We begin with the raw amino-acid sequence, 1133 residues long: Lon protease homolog, mitochondrial (1133 aa).

Residues 1–37 constitute a mitochondrion transit peptide; the sequence is MLRTRTTKTLSTVARTTRAIQYYRSIAKTAAVSQRRF. The propeptide at 38-98 is removed in mature form; by autocatalysis; the sequence is ASTLTVRDVE…ATNSGKSILA (61 aa). Composition is skewed to basic and acidic residues over residues 98–117 and 125–143; these read AKDD…VPDE and EPTR…EASK. Disordered stretches follow at residues 98–176 and 282–358; these read AKDD…KDVP and ELFP…LDDI. The span at 145-166 shows a compositional bias: low complexity; it reads SRSSASGGGQSSSSRSDSGDGS. The region spanning 182–480 is the Lon N-terminal domain; the sequence is MLALPIARRP…KSLLVLKKEL (299 aa). Composition is skewed to basic and acidic residues over residues 282-301 and 325-340; these read ELFP…KDTD and KLED…SELQ. The segment covering 348–358 has biased composition (acidic residues); that stretch reads TEEESEELDDI. Position 632–639 (632–639) interacts with ATP; it reads GPPGVGKT. The interval 839–892 is dispensable for catalytic activity; the sequence is KKLSIEDSPTSSADSKPKESVSSEEKAENNAKSSSEKTKDNNSEKTSDDIEALK. Positions 844 to 889 are disordered; the sequence is EDSPTSSADSKPKESVSSEEKAENNAKSSSEKTKDNNSEKTSDDIE. Basic and acidic residues predominate over residues 853–889; it reads SKPKESVSSEEKAENNAKSSSEKTKDNNSEKTSDDIE. A Lon proteolytic domain is found at 923-1109; the sequence is TTPPGVVMGL…NDIFQKLFKD (187 aa). Catalysis depends on residues S1015 and K1058.

Belongs to the peptidase S16 family. Homohexamer. Organized in a ring with a central cavity. The ATP-binding and proteolytic domains (AP-domain) form a hexameric chamber. Oligomerization is independent of its proteolytic activity and the autocatalytic maturation of its subunits.

The protein localises to the mitochondrion matrix. It carries out the reaction Hydrolysis of proteins in presence of ATP.. ATP-dependent serine protease that mediates the selective degradation of misfolded, unassembled or oxidatively damaged polypeptides as well as certain short-lived regulatory proteins in the mitochondrial matrix. May also have a chaperone function in the assembly of inner membrane protein complexes. Participates in the regulation of mitochondrial gene expression and in the maintenance of the integrity of the mitochondrial genome. Binds to mitochondrial DNA in a site-specific manner. Endogenous substrates include ABF2, ACO2, ILV1, ILV2, LSC1, LYS4, MGM101 and several oxidized proteins. The 2 nucleic acid-binding proteins ABF2 and MGM101 are protected from degradation by PIM1 when they are bound to DNA. This is Lon protease homolog, mitochondrial from Saccharomyces cerevisiae (strain ATCC 204508 / S288c) (Baker's yeast).